A 621-amino-acid polypeptide reads, in one-letter code: Transmembrane protein 200C (621 aa).

Residues Ala-12 to Asn-37 form a disordered region. A compositionally biased stretch (basic residues) spans Pro-25 to Lys-36. The helical transmembrane segment at Gly-53–Gly-73 threads the bilayer. Positions Gly-80 to Thr-147 are disordered. Low complexity predominate over residues Ser-125–Thr-147. The helical transmembrane segment at Val-167–Leu-187 threads the bilayer. 3 disordered regions span residues Trp-284–Pro-315, Ala-347–Ala-368, and Leu-384–Lys-598. Positions Ala-290–Pro-303 are enriched in low complexity. A compositionally biased stretch (basic and acidic residues) spans Pro-405–Leu-418. Pro residues predominate over residues Arg-479–Pro-490. Composition is skewed to low complexity over residues Gly-491–Ser-505 and Gly-523–Ser-533. The segment covering Glu-586–Phe-595 has biased composition (polar residues).

This sequence belongs to the TMEM200 family.

The protein resides in the membrane. The protein is Transmembrane protein 200C (TMEM200C) of Homo sapiens (Human).